The primary structure comprises 915 residues: Isoleucine--tRNA ligase (915 aa).

A 'HIGH' region motif is present at residues 57–67 (PYANGNLHMGH). Residue Glu-554 coordinates L-isoleucyl-5'-AMP. A 'KMSKS' region motif is present at residues 595-599 (KMSKS). Position 598 (Lys-598) interacts with ATP. Zn(2+) is bound by residues Cys-885, Cys-888, Cys-905, and Cys-908.

The protein belongs to the class-I aminoacyl-tRNA synthetase family. IleS type 1 subfamily. Monomer. Zn(2+) is required as a cofactor.

It localises to the cytoplasm. The catalysed reaction is tRNA(Ile) + L-isoleucine + ATP = L-isoleucyl-tRNA(Ile) + AMP + diphosphate. Functionally, catalyzes the attachment of isoleucine to tRNA(Ile). As IleRS can inadvertently accommodate and process structurally similar amino acids such as valine, to avoid such errors it has two additional distinct tRNA(Ile)-dependent editing activities. One activity is designated as 'pretransfer' editing and involves the hydrolysis of activated Val-AMP. The other activity is designated 'posttransfer' editing and involves deacylation of mischarged Val-tRNA(Ile). The polypeptide is Isoleucine--tRNA ligase (Staphylococcus carnosus (strain TM300)).